Reading from the N-terminus, the 270-residue chain is NADPH-dependent 7-cyano-7-deazaguanine reductase (270 aa).

79-81 (IES) contacts substrate. 81–82 (SK) lines the NADPH pocket. Catalysis depends on C177, which acts as the Thioimide intermediate. The Proton donor role is filled by D184. Residue 216–217 (HE) coordinates substrate. 245-246 (RG) contributes to the NADPH binding site.

The protein belongs to the GTP cyclohydrolase I family. QueF type 2 subfamily. Homodimer.

The protein localises to the cytoplasm. It catalyses the reaction 7-aminomethyl-7-carbaguanine + 2 NADP(+) = 7-cyano-7-deazaguanine + 2 NADPH + 3 H(+). The protein operates within tRNA modification; tRNA-queuosine biosynthesis. Functionally, catalyzes the NADPH-dependent reduction of 7-cyano-7-deazaguanine (preQ0) to 7-aminomethyl-7-deazaguanine (preQ1). This chain is NADPH-dependent 7-cyano-7-deazaguanine reductase, found in Acinetobacter baumannii (strain ATCC 17978 / DSM 105126 / CIP 53.77 / LMG 1025 / NCDC KC755 / 5377).